The following is a 194-amino-acid chain: Peptidyl-tRNA hydrolase (194 aa).

Tyr21 is a tRNA binding site. Residue His26 is the Proton acceptor of the active site. TRNA contacts are provided by Tyr72, Asn74, and Asn120.

Belongs to the PTH family. In terms of assembly, monomer.

It localises to the cytoplasm. The enzyme catalyses an N-acyl-L-alpha-aminoacyl-tRNA + H2O = an N-acyl-L-amino acid + a tRNA + H(+). Functionally, hydrolyzes ribosome-free peptidyl-tRNAs (with 1 or more amino acids incorporated), which drop off the ribosome during protein synthesis, or as a result of ribosome stalling. In terms of biological role, catalyzes the release of premature peptidyl moieties from peptidyl-tRNA molecules trapped in stalled 50S ribosomal subunits, and thus maintains levels of free tRNAs and 50S ribosomes. This is Peptidyl-tRNA hydrolase from Halorhodospira halophila (strain DSM 244 / SL1) (Ectothiorhodospira halophila (strain DSM 244 / SL1)).